The chain runs to 163 residues: MAIEPKVIEAFIEIPTGSQNKYEYDKERGVFKLDRVLFSPMFYPAEYGYIENTLALDGDPLDVLVIVSNPTFPGCVIDAKVLGFLNMIDGGEEDQKLIAVPTEDPRFKDVNSLNDLPKHKLDEIAHFFKTYKDLEGKKTEVGAYEDAEAAAKLIDECFARYKG.

Residues Lys-21, Arg-35, and Tyr-47 each coordinate substrate. The Mg(2+) site is built by Asp-57, Asp-62, and Asp-94. Tyr-131 lines the substrate pocket.

This sequence belongs to the PPase family. In terms of assembly, homohexamer. Requires Mg(2+) as cofactor.

It is found in the cytoplasm. It catalyses the reaction diphosphate + H2O = 2 phosphate + H(+). Catalyzes the hydrolysis of inorganic pyrophosphate (PPi) forming two phosphate ions. This Halalkalibacterium halodurans (strain ATCC BAA-125 / DSM 18197 / FERM 7344 / JCM 9153 / C-125) (Bacillus halodurans) protein is Inorganic pyrophosphatase.